Here is a 428-residue protein sequence, read N- to C-terminus: Serine--tRNA ligase (428 aa).

231–233 provides a ligand contact to L-serine; that stretch reads TAE. Residue 262-264 participates in ATP binding; that stretch reads RSE. L-serine is bound at residue Glu-285. Residue 349–352 coordinates ATP; sequence EISS. Ser-385 provides a ligand contact to L-serine.

This sequence belongs to the class-II aminoacyl-tRNA synthetase family. Type-1 seryl-tRNA synthetase subfamily. In terms of assembly, homodimer. The tRNA molecule binds across the dimer.

It is found in the cytoplasm. It carries out the reaction tRNA(Ser) + L-serine + ATP = L-seryl-tRNA(Ser) + AMP + diphosphate + H(+). It catalyses the reaction tRNA(Sec) + L-serine + ATP = L-seryl-tRNA(Sec) + AMP + diphosphate + H(+). The protein operates within aminoacyl-tRNA biosynthesis; selenocysteinyl-tRNA(Sec) biosynthesis; L-seryl-tRNA(Sec) from L-serine and tRNA(Sec): step 1/1. Its function is as follows. Catalyzes the attachment of serine to tRNA(Ser). Is also able to aminoacylate tRNA(Sec) with serine, to form the misacylated tRNA L-seryl-tRNA(Sec), which will be further converted into selenocysteinyl-tRNA(Sec). The protein is Serine--tRNA ligase of Staphylococcus aureus (strain Mu3 / ATCC 700698).